The sequence spans 179 residues: Large ribosomal subunit protein uL5 (179 aa).

The protein belongs to the universal ribosomal protein uL5 family. Part of the 50S ribosomal subunit; part of the 5S rRNA/L5/L18/L25 subcomplex. Contacts the 5S rRNA and the P site tRNA. Forms a bridge to the 30S subunit in the 70S ribosome.

In terms of biological role, this is one of the proteins that bind and probably mediate the attachment of the 5S RNA into the large ribosomal subunit, where it forms part of the central protuberance. In the 70S ribosome it contacts protein S13 of the 30S subunit (bridge B1b), connecting the 2 subunits; this bridge is implicated in subunit movement. Contacts the P site tRNA; the 5S rRNA and some of its associated proteins might help stabilize positioning of ribosome-bound tRNAs. The sequence is that of Large ribosomal subunit protein uL5 from Buchnera aphidicola subsp. Cinara cedri (strain Cc).